The sequence spans 53 residues: U1-poneritoxin-Dq5a (53 aa).

The first 23 residues, 1–23, serve as a signal peptide directing secretion; the sequence is MNIRLMFTLIALLVLTVSFSGAN. Disulfide bonds link Cys-25-Cys-42, Cys-32-Cys-47, and Cys-41-Cys-52.

Expressed by the venom gland.

It is found in the secreted. In terms of biological role, may have neurotoxic activity. This chain is U1-poneritoxin-Dq5a, found in Dinoponera quadriceps (South American ant).